A 447-amino-acid chain; its full sequence is Putative branched-chain amino acid carrier protein SERP0977 (447 aa).

The next 12 helical transmembrane spans lie at 5–25 (TWII…LIFP), 40–60 (ILAF…VGAL), 74–94 (PRFS…LFAI), 114–134 (GNLA…YLCL), 143–163 (IGSL…IKGF), 193–213 (GYLT…VNAI), 229–249 (IIAG…LGYI), 290–310 (LLGI…IVSV), 317–337 (IIPK…SFIL), 350–370 (VPVL…ILIA), 382–402 (IPLI…QGWI), and 417–437 (LEWF…SYFV).

Belongs to the branched chain amino acid transporter family.

It localises to the cell membrane. In terms of biological role, component of the transport system for branched-chain amino acids (leucine, isoleucine and valine), which is coupled to a proton motive force. This is Putative branched-chain amino acid carrier protein SERP0977 from Staphylococcus epidermidis (strain ATCC 35984 / DSM 28319 / BCRC 17069 / CCUG 31568 / BM 3577 / RP62A).